A 416-amino-acid polypeptide reads, in one-letter code: MLEQMGIAAKAASYKLALLSSCEKNRVLEKIADELEAQMESILSANVQDVEQARANGLSEAMLDRLALTPARLKAIADDVRQVCNLADPAGQVIDGGLLDSGLRLERRRVPLGVVGVIYEARPNVTVDVASLCLKTGNAVILRGGKETHRTNAATVLVIQKALKACDLPEAAVQAIDNPDRSLVSEMLRMDKYIDMLIPRGGAGLHKLCREQSTIPVITGGIGVCHIFVDSSADIAPALKIIVNAKTQRPSTCNTVETLLVHQDIAERFLPALSKQMAESGVTLHGDETVMQALHGPAKLVALKPEELDNEFLSLDLNVVVVENMDGAIAHIREHGTQHSDAILTCDMHNAARFVNEVDSAAVYVNASTRFTDGGQFGLGAEVAVSTQKLHARGPMGLEALTTYKWIGFGDGTIRA.

Belongs to the gamma-glutamyl phosphate reductase family.

It is found in the cytoplasm. It catalyses the reaction L-glutamate 5-semialdehyde + phosphate + NADP(+) = L-glutamyl 5-phosphate + NADPH + H(+). It functions in the pathway amino-acid biosynthesis; L-proline biosynthesis; L-glutamate 5-semialdehyde from L-glutamate: step 2/2. Catalyzes the NADPH-dependent reduction of L-glutamate 5-phosphate into L-glutamate 5-semialdehyde and phosphate. The product spontaneously undergoes cyclization to form 1-pyrroline-5-carboxylate. The chain is Gamma-glutamyl phosphate reductase from Salmonella typhi.